The chain runs to 431 residues: Acetylornithine aminotransferase (431 aa).

Residues 118 to 119 (GA) and phenylalanine 157 contribute to the pyridoxal 5'-phosphate site. N(2)-acetyl-L-ornithine is bound at residue arginine 160. Residue 251-254 (DEVQ) coordinates pyridoxal 5'-phosphate. Lysine 284 is subject to N6-(pyridoxal phosphate)lysine. Serine 313 contributes to the N(2)-acetyl-L-ornithine binding site. Residue threonine 314 coordinates pyridoxal 5'-phosphate.

The protein belongs to the class-III pyridoxal-phosphate-dependent aminotransferase family. ArgD subfamily. Homodimer. Pyridoxal 5'-phosphate serves as cofactor.

It is found in the cytoplasm. It catalyses the reaction N(2)-acetyl-L-ornithine + 2-oxoglutarate = N-acetyl-L-glutamate 5-semialdehyde + L-glutamate. It functions in the pathway amino-acid biosynthesis; L-arginine biosynthesis; N(2)-acetyl-L-ornithine from L-glutamate: step 4/4. The sequence is that of Acetylornithine aminotransferase from Bifidobacterium longum (strain NCC 2705).